A 439-amino-acid chain; its full sequence is Nuclear hormone receptor family member nhr-97 (439 aa).

Residues 1–13 (MSGDAQPSSNQRA) show a composition bias toward polar residues. The interval 1 to 22 (MSGDAQPSSNQRATEARPPPSP) is disordered. Positions 32–108 (GALCVVCGDR…VGMKIEAVKM (77 aa)) form a DNA-binding region, nuclear receptor. 2 consecutive NR C4-type zinc fingers follow at residues 35 to 56 (CVVC…CHGC) and 72 to 96 (CRYG…FHRC). Residues 112–135 (LTKRKKEKTDEDDTDDGGSHESFE) form a disordered region. Positions 173–408 (FVQPSLQNLL…GEGLLFWQLY (236 aa)) constitute an NR LBD domain.

This sequence belongs to the nuclear hormone receptor family.

The protein resides in the nucleus. Its function is as follows. Orphan nuclear receptor. This chain is Nuclear hormone receptor family member nhr-97 (nhr-97), found in Caenorhabditis elegans.